Here is a 944-residue protein sequence, read N- to C-terminus: Protein phosphatase 1 regulatory subunit 37 homolog (944 aa).

The tract at residues 42–71 (QQQSHSAATSVRKKTCQDANSSGEDPNGRI) is disordered. LRR repeat units follow at residues 203-224 (SCVRLNLSFNKQIDMRGWTTIF), 232-255 (SLQMLNLRYTNLNDRSIPALCKMA), 262-282 (SLTCLHLENTQMSGKNLLVLI), 290-311 (GLRELYLGDNGLQPTDGSHIYQ), and 318-338 (SLQLLDLRNNSIGDSGVRHIC). Residues 517-598 (EEGDSGVEKK…KERHQRFVRS (82 aa)) form a disordered region. Over residues 522–542 (GVEKKDGNECEGEDNKDRQDT) the composition is skewed to basic and acidic residues. Composition is skewed to polar residues over residues 543-554 (PAETENGVSSNE) and 567-585 (PESNNNEKSPLMASSSTSK). Residues 586 to 595 (LSRKERHQRF) show a composition bias toward basic residues.

Belongs to the PPP1R37 family.

The chain is Protein phosphatase 1 regulatory subunit 37 homolog from Caenorhabditis elegans.